The chain runs to 342 residues: Manganese-dependent ADP-ribose/CDP-alcohol diphosphatase (342 aa).

Position 1 is an N-acetylmethionine (M1). Zn(2+) contacts are provided by D25, Q27, D74, N110, H241, H278, and H280.

Belongs to the ADPRibase-Mn family. Monomer. Requires Mg(2+) as cofactor.

It catalyses the reaction CDP-choline + H2O = phosphocholine + CMP + 2 H(+). The enzyme catalyses ADP-D-ribose + H2O = D-ribose 5-phosphate + AMP + 2 H(+). It carries out the reaction CDP-glycerol + H2O = sn-glycerol 3-phosphate + CMP + 2 H(+). Hydrolyzes ADP-ribose, IDP-ribose, CDP-glycerol, CDP-choline and CDP-ethanolamine, but not other non-reducing ADP-sugars or CDP-glucose. May be involved in immune cell signaling as suggested by the second-messenger role of ADP-ribose, which activates TRPM2 as a mediator of oxidative/nitrosative stress. This chain is Manganese-dependent ADP-ribose/CDP-alcohol diphosphatase (ADPRM), found in Homo sapiens (Human).